Reading from the N-terminus, the 503-residue chain is Transcription termination/antitermination protein NusA (503 aa).

The S1 motif domain occupies 139-203 (GEIINGIVKR…KGPQIFLSRV (65 aa)). The KH domain maps to 308–378 (RHKVEVVVSQ…LDVEEVIGQL (71 aa)).

Belongs to the NusA family. Monomer. Binds directly to the core enzyme of the DNA-dependent RNA polymerase and to nascent RNA.

The protein localises to the cytoplasm. Participates in both transcription termination and antitermination. The sequence is that of Transcription termination/antitermination protein NusA from Rickettsia conorii (strain ATCC VR-613 / Malish 7).